The primary structure comprises 380 residues: Succinyl-diaminopimelate desuccinylase (380 aa).

Residue H69 participates in Zn(2+) binding. Residue D71 is part of the active site. D102 is a binding site for Zn(2+). The active-site Proton acceptor is E135. Positions 136, 164, and 353 each coordinate Zn(2+).

Belongs to the peptidase M20A family. DapE subfamily. As to quaternary structure, homodimer. Requires Zn(2+) as cofactor. It depends on Co(2+) as a cofactor.

It catalyses the reaction N-succinyl-(2S,6S)-2,6-diaminopimelate + H2O = (2S,6S)-2,6-diaminopimelate + succinate. It functions in the pathway amino-acid biosynthesis; L-lysine biosynthesis via DAP pathway; LL-2,6-diaminopimelate from (S)-tetrahydrodipicolinate (succinylase route): step 3/3. Functionally, catalyzes the hydrolysis of N-succinyl-L,L-diaminopimelic acid (SDAP), forming succinate and LL-2,6-diaminopimelate (DAP), an intermediate involved in the bacterial biosynthesis of lysine and meso-diaminopimelic acid, an essential component of bacterial cell walls. The polypeptide is Succinyl-diaminopimelate desuccinylase (Cereibacter sphaeroides (strain KD131 / KCTC 12085) (Rhodobacter sphaeroides)).